Reading from the N-terminus, the 160-residue chain is Ribosomal RNA large subunit methyltransferase H (160 aa).

Residues leucine 76 and glycine 108 each coordinate S-adenosyl-L-methionine.

Belongs to the RNA methyltransferase RlmH family. In terms of assembly, homodimer.

The protein resides in the cytoplasm. It carries out the reaction pseudouridine(1915) in 23S rRNA + S-adenosyl-L-methionine = N(3)-methylpseudouridine(1915) in 23S rRNA + S-adenosyl-L-homocysteine + H(+). Specifically methylates the pseudouridine at position 1915 (m3Psi1915) in 23S rRNA. This Afipia carboxidovorans (strain ATCC 49405 / DSM 1227 / KCTC 32145 / OM5) (Oligotropha carboxidovorans) protein is Ribosomal RNA large subunit methyltransferase H.